A 129-amino-acid chain; its full sequence is Large ribosomal subunit protein bL17 (129 aa).

This sequence belongs to the bacterial ribosomal protein bL17 family. As to quaternary structure, part of the 50S ribosomal subunit. Contacts protein L32.

In Actinobacillus succinogenes (strain ATCC 55618 / DSM 22257 / CCUG 43843 / 130Z), this protein is Large ribosomal subunit protein bL17.